The following is a 421-amino-acid chain: Cytochrome c biogenesis protein Ccs1 (421 aa).

3 helical membrane-spanning segments follow: residues 12–32 (LRFA…GTVI), 71–91 (TWWF…CTLL), and 157–177 (IAPI…IIGS).

This sequence belongs to the Ccs1/CcsB family. In terms of assembly, may interact with CcsA.

It localises to the plastid. Its subcellular location is the chloroplast thylakoid membrane. Functionally, required during biogenesis of c-type cytochromes (cytochrome c6 and cytochrome f) at the step of heme attachment. This chain is Cytochrome c biogenesis protein Ccs1, found in Thalassiosira pseudonana (Marine diatom).